The primary structure comprises 497 residues: Putative aldehyde dehydrogenase AldA (497 aa).

An NAD(+)-binding site is contributed by 213 to 219 (GKGSESG). Active-site residues include Glu-257 and Cys-291.

The protein belongs to the aldehyde dehydrogenase family.

It catalyses the reaction an aldehyde + NAD(+) + H2O = a carboxylate + NADH + 2 H(+). This chain is Putative aldehyde dehydrogenase AldA (aldA), found in Staphylococcus epidermidis (strain ATCC 35984 / DSM 28319 / BCRC 17069 / CCUG 31568 / BM 3577 / RP62A).